We begin with the raw amino-acid sequence, 143 residues long: NADH-quinone oxidoreductase subunit A (143 aa).

The next 3 membrane-spanning stretches (helical) occupy residues F8 to T28, F63 to W83, and F93 to W113.

This sequence belongs to the complex I subunit 3 family. As to quaternary structure, NDH-1 is composed of 14 different subunits. Subunits NuoA, H, J, K, L, M, N constitute the membrane sector of the complex.

Its subcellular location is the cell inner membrane. It catalyses the reaction a quinone + NADH + 5 H(+)(in) = a quinol + NAD(+) + 4 H(+)(out). NDH-1 shuttles electrons from NADH, via FMN and iron-sulfur (Fe-S) centers, to quinones in the respiratory chain. The immediate electron acceptor for the enzyme in this species is believed to be a menaquinone. Couples the redox reaction to proton translocation (for every two electrons transferred, four hydrogen ions are translocated across the cytoplasmic membrane), and thus conserves the redox energy in a proton gradient. The protein is NADH-quinone oxidoreductase subunit A of Chlorobium luteolum (strain DSM 273 / BCRC 81028 / 2530) (Pelodictyon luteolum).